Here is a 317-residue protein sequence, read N- to C-terminus: tRNA dimethylallyltransferase (317 aa).

13–20 contacts ATP; that stretch reads GPTASGKS. Residue 15–20 coordinates substrate; it reads TASGKS.

The protein belongs to the IPP transferase family. As to quaternary structure, monomer. The cofactor is Mg(2+).

It carries out the reaction adenosine(37) in tRNA + dimethylallyl diphosphate = N(6)-dimethylallyladenosine(37) in tRNA + diphosphate. Catalyzes the transfer of a dimethylallyl group onto the adenine at position 37 in tRNAs that read codons beginning with uridine, leading to the formation of N6-(dimethylallyl)adenosine (i(6)A). The protein is tRNA dimethylallyltransferase of Kineococcus radiotolerans (strain ATCC BAA-149 / DSM 14245 / SRS30216).